Here is a 170-residue protein sequence, read N- to C-terminus: Ribosome maturation factor RimM (170 aa).

A PRC barrel domain is found at 93-165 (PDEFHDHELI…RVVIDPPPGL (73 aa)).

The protein belongs to the RimM family. As to quaternary structure, binds ribosomal protein uS19.

It localises to the cytoplasm. Its function is as follows. An accessory protein needed during the final step in the assembly of 30S ribosomal subunit, possibly for assembly of the head region. Essential for efficient processing of 16S rRNA. May be needed both before and after RbfA during the maturation of 16S rRNA. It has affinity for free ribosomal 30S subunits but not for 70S ribosomes. The protein is Ribosome maturation factor RimM of Thermobifida fusca (strain YX).